Consider the following 53-residue polypeptide: ATP synthase protein 8 (53 aa).

A helical transmembrane segment spans residues 5–25 (APISWLTLFFVFSITLVIFNI).

It belongs to the ATPase protein 8 family. As to quaternary structure, F-type ATPases have 2 components, CF(1) - the catalytic core - and CF(0) - the membrane proton channel.

It is found in the mitochondrion membrane. In terms of biological role, mitochondrial membrane ATP synthase (F(1)F(O) ATP synthase or Complex V) produces ATP from ADP in the presence of a proton gradient across the membrane which is generated by electron transport complexes of the respiratory chain. F-type ATPases consist of two structural domains, F(1) - containing the extramembraneous catalytic core and F(0) - containing the membrane proton channel, linked together by a central stalk and a peripheral stalk. During catalysis, ATP synthesis in the catalytic domain of F(1) is coupled via a rotary mechanism of the central stalk subunits to proton translocation. Part of the complex F(0) domain. Minor subunit located with subunit a in the membrane. The sequence is that of ATP synthase protein 8 from Aedes aegypti (Yellowfever mosquito).